A 163-amino-acid chain; its full sequence is Phosphopantetheine adenylyltransferase (163 aa).

Residue Thr-10 participates in substrate binding. ATP-binding positions include 10 to 11 and His-18; that span reads TF. Residues Lys-42, Leu-74, and Arg-88 each coordinate substrate. ATP-binding positions include 89–91, Glu-99, and 124–130; these read GLR and NSFISST.

It belongs to the bacterial CoaD family. In terms of assembly, homohexamer. Mg(2+) serves as cofactor.

The protein localises to the cytoplasm. The enzyme catalyses (R)-4'-phosphopantetheine + ATP + H(+) = 3'-dephospho-CoA + diphosphate. The protein operates within cofactor biosynthesis; coenzyme A biosynthesis; CoA from (R)-pantothenate: step 4/5. In terms of biological role, reversibly transfers an adenylyl group from ATP to 4'-phosphopantetheine, yielding dephospho-CoA (dPCoA) and pyrophosphate. In Shewanella putrefaciens (strain CN-32 / ATCC BAA-453), this protein is Phosphopantetheine adenylyltransferase.